The sequence spans 1403 residues: Nidogen-2 (1403 aa).

The first 30 residues, 1–30, serve as a signal peptide directing secretion; that stretch reads MFRDPTAGWLTPPSPLSLLVMLLLLSRVGA. Residues 108–274 form the NIDO domain; it reads PFLADIDTSH…GVWAFHIGSR (167 aa). The segment at 323-403 is disordered; sequence EDVEYPPVEP…KQGRPVGEGE (81 aa). Residues Ser386 and Ser475 are each glycosylated (O-linked (Xyl...) (chondroitin sulfate) serine). Positions 386–395 are enriched in polar residues; sequence SASLDPQTKQ. Residues 507-547 form the EGF-like 1 domain; the sequence is NLETCEHSHGRCSQHAFCTDYTTGFCCHCQSRFYGNGKHCL. Intrachain disulfides connect Cys511–Cys524, Cys518–Cys533, and Cys535–Cys546. A Nidogen G2 beta-barrel domain is found at 551 to 781; the sequence is APHRVNGKVS…GPVEVDSAPV (231 aa). Residues Asn681, Asn716, and Asn726 are each glycosylated (N-linked (GlcNAc...) asparagine). An EGF-like 2 domain is found at 782–823; it reads GVNPCYDGSHTCDTTARCHPGTGVDYTCECTPGFQGDGRSCV. 18 disulfide bridges follow: Cys786–Cys799, Cys793–Cys809, Cys811–Cys822, Cys828–Cys841, Cys835–Cys850, Cys852–Cys865, Cys875–Cys890, Cys882–Cys900, Cys902–Cys913, Cys919–Cys930, Cys924–Cys939, Cys941–Cys952, Cys968–Cys991, Cys1002–Cys1009, Cys1011–Cys1033, Cys1047–Cys1071, Cys1082–Cys1089, and Cys1091–Cys1112. An EGF-like 3; calcium-binding domain is found at 824–862; sequence DVNECATGFHRCGPNSVCVNLVGSYRCECRSGYEFADDQ. Residues 871-914 enclose the EGF-like 4 domain; sequence PPNPCLDGSHTCAPEGQARCIHHGGSSFSCACLPGFIGTGHQCS. The region spanning 915 to 953 is the EGF-like 5; calcium-binding domain; sequence DVDECAENRCHEAAICYNTPGSFSCRCQPGYRGDGFHCT. A Cell attachment site motif is present at residues 946-948; it reads RGD. Thyroglobulin type-1 domains lie at 965 to 1033 and 1044 to 1112; these read LKPC…PPHC and RTVC…RPAC. A disordered region spans residues 1021–1043; it reads GTQTPPGSTPPHCGPPPEPTQRP. Residues 1027–1040 show a composition bias toward pro residues; the sequence is GSTPPHCGPPPEPT. Asn1152 carries N-linked (GlcNAc...) asparagine glycosylation. LDL-receptor class B repeat units lie at residues 1182 to 1225, 1226 to 1268, 1269 to 1313, 1314 to 1355, and 1357 to 1401; these read RMVY…DHFR, RTMY…DPIR, GNLY…DPFS, KLLC…YADH, and YHTD…CPTG. Arg1336 is subject to Omega-N-methylarginine.

As to quaternary structure, interacts with LAMA2. Interacts with COL13A1. Interacts with EFEMP2. Highly N- and O-glycosylated.

The protein localises to the secreted. It is found in the extracellular space. The protein resides in the extracellular matrix. It localises to the basement membrane. In terms of biological role, cell adhesion glycoprotein. Might be involved in osteoblast differentiation. It probably has a role in cell-extracellular matrix interactions. This Mus musculus (Mouse) protein is Nidogen-2 (Nid2).